Consider the following 378-residue polypeptide: Pyrimidine monooxygenase RutA (378 aa).

Residues 65-66 (IK), N131, E140, 156-157 (RY), and S206 contribute to the FMN site.

Belongs to the NtaA/SnaA/DszA monooxygenase family. RutA subfamily.

The catalysed reaction is uracil + FMNH2 + NADH + O2 = (Z)-3-ureidoacrylate + FMN + NAD(+) + H2O + H(+). It catalyses the reaction thymine + FMNH2 + NADH + O2 = (Z)-2-methylureidoacrylate + FMN + NAD(+) + H2O + H(+). Catalyzes the pyrimidine ring opening between N-3 and C-4 by an unusual flavin hydroperoxide-catalyzed mechanism, adding oxygen atoms in the process to yield ureidoacrylate peracid, that immediately reacts with FMN forming ureidoacrylate and FMN-N(5)-oxide. The FMN-N(5)-oxide reacts spontaneously with NADH to produce FMN. Requires the flavin reductase RutF to regenerate FMN in vivo. This Cronobacter turicensis (strain DSM 18703 / CCUG 55852 / LMG 23827 / z3032) protein is Pyrimidine monooxygenase RutA.